The primary structure comprises 525 residues: Probable protein kinase UbiB (525 aa).

In terms of domain architecture, Protein kinase spans 118-500 (DFERVPVASA…QKRTNRLLQG (383 aa)). Residues 124-132 (VASASIAQV) and K150 contribute to the ATP site. The active-site Proton acceptor is the D285. Residues 501-521 (LLLFGVAVGVGAALARVFLAL) form a helical membrane-spanning segment.

It belongs to the ABC1 family. UbiB subfamily.

It is found in the cell inner membrane. The protein operates within cofactor biosynthesis; ubiquinone biosynthesis [regulation]. Is probably a protein kinase regulator of UbiI activity which is involved in aerobic coenzyme Q (ubiquinone) biosynthesis. This chain is Probable protein kinase UbiB, found in Paraburkholderia xenovorans (strain LB400).